Reading from the N-terminus, the 374-residue chain is Carbamoyl phosphate synthase small chain (374 aa).

The segment at 1 to 185 is CPSase; sequence MKAILALEDG…DVSSGYKWSD (185 aa). Positions 45, 237, and 239 each coordinate L-glutamine. The region spanning 189-374 is the Glutamine amidotransferase type-1 domain; sequence RLVLVDYGVK…RNLVKDATGK (186 aa). Cys-264 acts as the Nucleophile in catalysis. L-glutamine contacts are provided by Leu-265, Gln-268, Asn-306, Gly-308, and Phe-309. Residues His-347 and Glu-349 contribute to the active site.

This sequence belongs to the CarA family. As to quaternary structure, composed of two chains; the small (or glutamine) chain promotes the hydrolysis of glutamine to ammonia, which is used by the large (or ammonia) chain to synthesize carbamoyl phosphate. Tetramer of heterodimers (alpha,beta)4.

The catalysed reaction is hydrogencarbonate + L-glutamine + 2 ATP + H2O = carbamoyl phosphate + L-glutamate + 2 ADP + phosphate + 2 H(+). It catalyses the reaction L-glutamine + H2O = L-glutamate + NH4(+). It functions in the pathway amino-acid biosynthesis; L-arginine biosynthesis; carbamoyl phosphate from bicarbonate: step 1/1. The protein operates within pyrimidine metabolism; UMP biosynthesis via de novo pathway; (S)-dihydroorotate from bicarbonate: step 1/3. Small subunit of the glutamine-dependent carbamoyl phosphate synthetase (CPSase). CPSase catalyzes the formation of carbamoyl phosphate from the ammonia moiety of glutamine, carbonate, and phosphate donated by ATP, constituting the first step of 2 biosynthetic pathways, one leading to arginine and/or urea and the other to pyrimidine nucleotides. The small subunit (glutamine amidotransferase) binds and cleaves glutamine to supply the large subunit with the substrate ammonia. The polypeptide is Carbamoyl phosphate synthase small chain (Maridesulfovibrio salexigens (strain ATCC 14822 / DSM 2638 / NCIMB 8403 / VKM B-1763) (Desulfovibrio salexigens)).